Consider the following 683-residue polypeptide: Amphiphysin (683 aa).

Coiled-coil stretches lie at residues 10–83 (AKNV…SLHE) and 144–191 (DYDS…QEEL). The region spanning 24-240 (VLQKLGKADE…MTKLGDQHAD (217 aa)) is the BAR domain. Disordered regions lie at residues 244 to 311 (SIQG…KVTP), 421 to 443 (AETEQALPTEPQAEEPPTTAAAP), and 455 to 599 (EPKE…ASLS). Serine 252 carries the phosphoserine modification. Threonine 260 is modified (phosphothreonine). Over residues 261–274 (PSPPEEASPLPSPT) the composition is skewed to pro residues. 4 positions are modified to phosphoserine: serine 262, serine 268, serine 272, and serine 276. Threonine 280 bears the Phosphothreonine mark. Composition is skewed to low complexity over residues 424–443 (EQALPTEPQAEEPPTTAAAP) and 468–477 (AGETVGTEGS). Serine 496 bears the Phosphoserine mark. A compositionally biased stretch (basic and acidic residues) spans 539–559 (SNHEGEEHQETTTGTETREAT). The segment covering 585–596 (AATPAPAGAVDA) has biased composition (low complexity). One can recognise an SH3 domain in the interval 610–683 (GFLYKVETLH…FPENFTRHLE (74 aa)). Serine 626 is modified (phosphoserine).

As to quaternary structure, heterodimer with BIN1. Binds SH3GLB1. Interacts with REPS1 and SGIP1. Binds AP2A2. Interacts with AP2B1. Interacts with DNM1 and SYNJ1.

The protein localises to the cytoplasmic vesicle. The protein resides in the secretory vesicle. It localises to the synaptic vesicle membrane. It is found in the cytoplasm. Its subcellular location is the cytoskeleton. May participate in mechanisms of regulated exocytosis in synapses and certain endocrine cell types. May control the properties of the membrane associated cytoskeleton. This is Amphiphysin (Amph) from Rattus norvegicus (Rat).